The following is a 166-amino-acid chain: Large ribosomal subunit protein bL19 (166 aa).

This sequence belongs to the bacterial ribosomal protein bL19 family.

Functionally, this protein is located at the 30S-50S ribosomal subunit interface and may play a role in the structure and function of the aminoacyl-tRNA binding site. The sequence is that of Large ribosomal subunit protein bL19 from Chelativorans sp. (strain BNC1).